The primary structure comprises 198 residues: Density-regulated protein (198 aa).

Residues 76-110 (QETGTVEGQATSGEEEEKKKQKRGGRGQIKQKKKT) are disordered. Positions 77–87 (ETGTVEGQATS) are enriched in polar residues. The segment covering 95–110 (KQKRGGRGQIKQKKKT) has biased composition (basic residues). The region spanning 115 to 182 (ITIAKIPRAK…DIIDVIQEKW (68 aa)) is the SUI1 domain.

This sequence belongs to the DENR family.

Functionally, may be involved in the translation of target mRNAs by scanning and recognition of the initiation codon. Involved in translation initiation; promotes recruitment of aminoacetyled initiator tRNA to P site of 40S ribosomes. Can promote release of deacylated tRNA and mRNA from recycled 40S subunits following ABCE1-mediated dissociation of post-termination ribosomal complexes into subunits. The protein is Density-regulated protein (denr) of Xenopus laevis (African clawed frog).